The primary structure comprises 275 residues: Urease accessory protein UreD (275 aa).

Belongs to the UreD family. In terms of assembly, ureD, UreF and UreG form a complex that acts as a GTP-hydrolysis-dependent molecular chaperone, activating the urease apoprotein by helping to assemble the nickel containing metallocenter of UreC. The UreE protein probably delivers the nickel.

Its subcellular location is the cytoplasm. In terms of biological role, required for maturation of urease via the functional incorporation of the urease nickel metallocenter. The sequence is that of Urease accessory protein UreD from Cereibacter sphaeroides (strain ATCC 17023 / DSM 158 / JCM 6121 / CCUG 31486 / LMG 2827 / NBRC 12203 / NCIMB 8253 / ATH 2.4.1.) (Rhodobacter sphaeroides).